The sequence spans 351 residues: Phosphoribosylformylglycinamidine cyclo-ligase (351 aa).

The protein belongs to the AIR synthase family.

The protein localises to the cytoplasm. It catalyses the reaction 2-formamido-N(1)-(5-O-phospho-beta-D-ribosyl)acetamidine + ATP = 5-amino-1-(5-phospho-beta-D-ribosyl)imidazole + ADP + phosphate + H(+). It participates in purine metabolism; IMP biosynthesis via de novo pathway; 5-amino-1-(5-phospho-D-ribosyl)imidazole from N(2)-formyl-N(1)-(5-phospho-D-ribosyl)glycinamide: step 2/2. In Xylella fastidiosa (strain Temecula1 / ATCC 700964), this protein is Phosphoribosylformylglycinamidine cyclo-ligase.